Consider the following 196-residue polypeptide: Holliday junction branch migration complex subunit RuvA (196 aa).

Residues 1 to 63 (MINKIHGKVI…ENELKLFGFL (63 aa)) are domain I. Residues 64-139 (NSDERETFKS…KLLINNELES (76 aa)) are domain II. Residue S139 is a region of interest, flexible linker. The segment at 139–196 (SSLFGFKELEESIVSMGFDRKIVNSKLKEACDLIEFSNLKDSEKEQFLFKEVLKRMSN) is domain III.

This sequence belongs to the RuvA family. Homotetramer. Forms an RuvA(8)-RuvB(12)-Holliday junction (HJ) complex. HJ DNA is sandwiched between 2 RuvA tetramers; dsDNA enters through RuvA and exits via RuvB. An RuvB hexamer assembles on each DNA strand where it exits the tetramer. Each RuvB hexamer is contacted by two RuvA subunits (via domain III) on 2 adjacent RuvB subunits; this complex drives branch migration. In the full resolvosome a probable DNA-RuvA(4)-RuvB(12)-RuvC(2) complex forms which resolves the HJ.

Its subcellular location is the cytoplasm. The RuvA-RuvB-RuvC complex processes Holliday junction (HJ) DNA during genetic recombination and DNA repair, while the RuvA-RuvB complex plays an important role in the rescue of blocked DNA replication forks via replication fork reversal (RFR). RuvA specifically binds to HJ cruciform DNA, conferring on it an open structure. The RuvB hexamer acts as an ATP-dependent pump, pulling dsDNA into and through the RuvAB complex. HJ branch migration allows RuvC to scan DNA until it finds its consensus sequence, where it cleaves and resolves the cruciform DNA. This chain is Holliday junction branch migration complex subunit RuvA, found in Borrelia garinii subsp. bavariensis (strain ATCC BAA-2496 / DSM 23469 / PBi) (Borreliella bavariensis).